Consider the following 227-residue polypeptide: NDR1/HIN1-like protein 10 (227 aa).

Residues 42–62 (VKVIISLIVILGVAALIFWLI) form a helical membrane-spanning segment. Asparagine 138 and asparagine 210 each carry an N-linked (GlcNAc...) asparagine glycan.

In terms of tissue distribution, expressed in senescing leaves.

It is found in the cell membrane. In terms of biological role, may play a role in plant immunity. The protein is NDR1/HIN1-like protein 10 of Arabidopsis thaliana (Mouse-ear cress).